Consider the following 411-residue polypeptide: Multidrug resistance protein MdtG (411 aa).

A run of 10 helical transmembrane segments spans residues 14 to 34 (LFVA…IMPF), 56 to 76 (LVFS…GGLA), 89 to 109 (ALGM…WQFL), 113 to 133 (AVLG…ATQV), 144 to 164 (TLST…GLLA), 171 to 191 (PVFY…LLYV), 219 to 239 (ILSL…IAPI), 254 to 274 (LAFV…MSAP), 288 to 308 (ILVF…FVQT), and 376 to 396 (AVFC…WWCL).

It belongs to the major facilitator superfamily. DHA1 family. MdtG (TC 2.A.1.2.20) subfamily.

The protein resides in the cell inner membrane. This Serratia proteamaculans (strain 568) protein is Multidrug resistance protein MdtG.